An 87-amino-acid chain; its full sequence is Cell division topological specificity factor (87 aa).

It belongs to the MinE family.

Its function is as follows. Prevents the cell division inhibition by proteins MinC and MinD at internal division sites while permitting inhibition at polar sites. This ensures cell division at the proper site by restricting the formation of a division septum at the midpoint of the long axis of the cell. The polypeptide is Cell division topological specificity factor (Delftia acidovorans (strain DSM 14801 / SPH-1)).